The chain runs to 417 residues: Putative UDP-arabinose 4-epimerase 2 (417 aa).

At 1-31 the chain is on the cytoplasmic side; the sequence is MLNLGRARTGRQNRSMSFEGLDFADPKKNNN. Residues 32–54 traverse the membrane as a helical; Signal-anchor for type II membrane protein segment; that stretch reads YMGKIVLVMTLTAMCILLLNQSP. Residues 55-417 lie on the Lumenal side of the membrane; it reads TFNTPSVFSR…YGSSSLVSAY (363 aa). 71-102 is an NAD(+) binding site; sequence HVLVTGGAGYIGSHAALRLLKDSYRVTIVDNL. Residue Tyr-219 is the Proton acceptor of the active site.

This sequence belongs to the NAD(P)-dependent epimerase/dehydratase family. The cofactor is NAD(+).

It is found in the golgi apparatus. It localises to the golgi stack membrane. It carries out the reaction UDP-beta-L-arabinopyranose = UDP-alpha-D-xylose. It functions in the pathway nucleotide-sugar biosynthesis; UDP-L-arabinose biosynthesis; UDP-L-arabinose from UDP-alpha-D-xylose: step 1/1. The protein operates within cell wall biogenesis; cell wall polysaccharide biosynthesis. This chain is Putative UDP-arabinose 4-epimerase 2, found in Arabidopsis thaliana (Mouse-ear cress).